Reading from the N-terminus, the 104-residue chain is Phosphoribosyl-ATP pyrophosphatase (104 aa).

It belongs to the PRA-PH family.

It is found in the cytoplasm. The enzyme catalyses 1-(5-phospho-beta-D-ribosyl)-ATP + H2O = 1-(5-phospho-beta-D-ribosyl)-5'-AMP + diphosphate + H(+). It functions in the pathway amino-acid biosynthesis; L-histidine biosynthesis; L-histidine from 5-phospho-alpha-D-ribose 1-diphosphate: step 2/9. The sequence is that of Phosphoribosyl-ATP pyrophosphatase from Methanoregula boonei (strain DSM 21154 / JCM 14090 / 6A8).